The primary structure comprises 46 residues: Viscotoxin-A2 (46 aa).

3 disulfide bridges follow: C3/C40, C4/C32, and C16/C26.

The protein belongs to the plant thionin (TC 1.C.44) family.

The protein resides in the secreted. Thionins are small plant proteins which are toxic to animal cells. They seem to exert their toxic effect at the level of the cell membrane. Their precise function is not known. The sequence is that of Viscotoxin-A2 (THI2.3) from Viscum album (European mistletoe).